A 353-amino-acid chain; its full sequence is Phospho-N-acetylmuramoyl-pentapeptide-transferase (353 aa).

The next 10 helical transmembrane spans lie at 24-44 (LGFF…ILWA), 66-86 (TPTM…VLCA), 88-108 (LSNL…FVGF), 129-149 (FGML…KGLD), 160-180 (PLFE…FLST), 192-212 (GLAS…VYVA), 229-249 (VGEL…FLWY), 256-276 (VFMG…NAIV), 281-301 (ILLV…ILQV), and 330-350 (KVIV…LLSL).

The protein belongs to the glycosyltransferase 4 family. MraY subfamily. Mg(2+) serves as cofactor.

The protein resides in the cell inner membrane. It carries out the reaction UDP-N-acetyl-alpha-D-muramoyl-L-alanyl-gamma-D-glutamyl-meso-2,6-diaminopimeloyl-D-alanyl-D-alanine + di-trans,octa-cis-undecaprenyl phosphate = di-trans,octa-cis-undecaprenyl diphospho-N-acetyl-alpha-D-muramoyl-L-alanyl-D-glutamyl-meso-2,6-diaminopimeloyl-D-alanyl-D-alanine + UMP. It participates in cell wall biogenesis; peptidoglycan biosynthesis. Catalyzes the initial step of the lipid cycle reactions in the biosynthesis of the cell wall peptidoglycan: transfers peptidoglycan precursor phospho-MurNAc-pentapeptide from UDP-MurNAc-pentapeptide onto the lipid carrier undecaprenyl phosphate, yielding undecaprenyl-pyrophosphoryl-MurNAc-pentapeptide, known as lipid I. This chain is Phospho-N-acetylmuramoyl-pentapeptide-transferase, found in Helicobacter pylori (strain J99 / ATCC 700824) (Campylobacter pylori J99).